Consider the following 266-residue polypeptide: MSIYKDINIASAKPSLKERKNIKHYALDCLNIDEKNNAPLFKTLLEDAMKVSQKEILLIVGGSSFYLKSILEGLSSMPKLNNDQILKIEREIATLTNPYAFLKSIDPNMAFKIHSNDTYRIHKALEIFYATHTPPSEYFKKNPKKPFEHAITLFALCIEKTVLHNRIKQRTKNMLDCGLIEEIKALYTQYPKDSQPFKAIGVKESILYLEKQLTLKELEEAIVSNTIKLAKRQNTFNKTQFNNLYVGSVEEVRHAILKRSKSGIKE.

Belongs to the IPP transferase family. In terms of assembly, monomer. Requires Mg(2+) as cofactor.

The enzyme catalyses adenosine(37) in tRNA + dimethylallyl diphosphate = N(6)-dimethylallyladenosine(37) in tRNA + diphosphate. Functionally, catalyzes the transfer of a dimethylallyl group onto the adenine at position 37 in tRNAs that read codons beginning with uridine, leading to the formation of N6-(dimethylallyl)adenosine (i(6)A). The chain is tRNA dimethylallyltransferase (miaA) from Helicobacter acinonychis (strain Sheeba).